The following is a 226-amino-acid chain: Ribonuclease 3 (226 aa).

The 123-residue stretch at isoleucine 6–aspartate 128 folds into the RNase III domain. Glutamate 41 lines the Mg(2+) pocket. Aspartate 45 is an active-site residue. Aspartate 114 and glutamate 117 together coordinate Mg(2+). Residue glutamate 117 is part of the active site. The DRBM domain occupies aspartate 155 to leucine 225.

The protein belongs to the ribonuclease III family. Homodimer. The cofactor is Mg(2+).

The protein localises to the cytoplasm. The catalysed reaction is Endonucleolytic cleavage to 5'-phosphomonoester.. Digests double-stranded RNA. Involved in the processing of primary rRNA transcript to yield the immediate precursors to the large and small rRNAs (23S and 16S). Processes some mRNAs, and tRNAs when they are encoded in the rRNA operon. Processes pre-crRNA and tracrRNA of type II CRISPR loci if present in the organism. The chain is Ribonuclease 3 from Yersinia pseudotuberculosis serotype O:1b (strain IP 31758).